Consider the following 694-residue polypeptide: MARSVPLEKVRNIGIAAHIDAGKTTTTERILFYSGVVHKIGEVHDGNAVTDWMEQERERGITITAAAISTSWKDYRVNIIDTPGHVDFTIEVERSMRVLDGVVAVFCSVGGVQPQSETVWRQADRYSVPRIVFVNKMDRTGADFFKVYGQIRDRVRANAVPIQIPIGAESDFQGIVDLVEMKAHIYTNDLGTDILVTDIPAELQETAAEWRSKMVEAVAETDEALLDKYFEDGDLSIEDIKAGLRKGVLIQGNDRLVPMLCGSAFKNKGVQLLLDAVVELLPSPQDIPPIQGTLPDGEVALRPSSDEAPFSALAFKIMADPYGRLTFVRVYSGILQKGSYVYNATKGKKERVSRLIILKADDRIEVDELRAGDLGAVLGLKDTFTGDTLCDDQNPIILESLFIPEPVISVAVEPKTKNDMEKLSKALQALSEEDPTFRVSVDSETNQTVIAGMGELHLEILVDRMLREYKVEANIGAPQVAYRETVRKAVKAEGKFVRQSGGKGQYGHVVIELEPAEPGTGFEFVSKIVGGTVPKEYVGPAEQGMKETCESGVLAGYPLIDIKATLVDGSYHDVDSSEMAFKIAGSMAIKEAVRKADPVLLEPVMKVEVEVPEDFLGSVMGNLISRRGQIEGQATTNGTATVSAKVPLAEMFGYATDLRSMTQGRGIFTMEFSQYEEVPRNVAETIIAKNKGNA.

One can recognise a tr-type G domain in the interval 8 to 285 (EKVRNIGIAA…AVVELLPSPQ (278 aa)). Residues 17 to 24 (AHIDAGKT), 81 to 85 (DTPGH), and 135 to 138 (NKMD) contribute to the GTP site.

The protein belongs to the TRAFAC class translation factor GTPase superfamily. Classic translation factor GTPase family. EF-G/EF-2 subfamily.

Its subcellular location is the cytoplasm. Functionally, catalyzes the GTP-dependent ribosomal translocation step during translation elongation. During this step, the ribosome changes from the pre-translocational (PRE) to the post-translocational (POST) state as the newly formed A-site-bound peptidyl-tRNA and P-site-bound deacylated tRNA move to the P and E sites, respectively. Catalyzes the coordinated movement of the two tRNA molecules, the mRNA and conformational changes in the ribosome. This Synechococcus sp. (strain ATCC 27144 / PCC 6301 / SAUG 1402/1) (Anacystis nidulans) protein is Elongation factor G (fusA).